We begin with the raw amino-acid sequence, 129 residues long: Small ribosomal subunit protein uS11 (129 aa).

This sequence belongs to the universal ribosomal protein uS11 family. As to quaternary structure, part of the 30S ribosomal subunit. Interacts with proteins S7 and S18. Binds to IF-3.

Located on the platform of the 30S subunit, it bridges several disparate RNA helices of the 16S rRNA. Forms part of the Shine-Dalgarno cleft in the 70S ribosome. In Lysinibacillus sphaericus (strain C3-41), this protein is Small ribosomal subunit protein uS11.